We begin with the raw amino-acid sequence, 182 residues long: ATP-dependent protease subunit HslV (182 aa).

T12 is a catalytic residue. Na(+) is bound by residues A167, C170, and T173.

It belongs to the peptidase T1B family. HslV subfamily. As to quaternary structure, a double ring-shaped homohexamer of HslV is capped on each side by a ring-shaped HslU homohexamer. The assembly of the HslU/HslV complex is dependent on binding of ATP.

The protein resides in the cytoplasm. It carries out the reaction ATP-dependent cleavage of peptide bonds with broad specificity.. Its activity is regulated as follows. Allosterically activated by HslU binding. In terms of biological role, protease subunit of a proteasome-like degradation complex believed to be a general protein degrading machinery. This chain is ATP-dependent protease subunit HslV, found in Chlorobium limicola (strain DSM 245 / NBRC 103803 / 6330).